The chain runs to 176 residues: Inner membrane-spanning protein YciB (176 aa).

5 helical membrane-spanning segments follow: residues 23 to 43 (MIAA…FLYW), 50 to 70 (TMQW…IVLG), 74 to 94 (FIMW…LGSH), 119 to 139 (LTYM…FVFT), and 150 to 170 (MFGS…YLST).

The protein belongs to the YciB family.

It localises to the cell inner membrane. Functionally, plays a role in cell envelope biogenesis, maintenance of cell envelope integrity and membrane homeostasis. This chain is Inner membrane-spanning protein YciB, found in Neisseria gonorrhoeae (strain ATCC 700825 / FA 1090).